The sequence spans 233 residues: 2-C-methyl-D-erythritol 4-phosphate cytidylyltransferase (233 aa).

This sequence belongs to the IspD/TarI cytidylyltransferase family. IspD subfamily.

The enzyme catalyses 2-C-methyl-D-erythritol 4-phosphate + CTP + H(+) = 4-CDP-2-C-methyl-D-erythritol + diphosphate. It functions in the pathway isoprenoid biosynthesis; isopentenyl diphosphate biosynthesis via DXP pathway; isopentenyl diphosphate from 1-deoxy-D-xylulose 5-phosphate: step 2/6. Functionally, catalyzes the formation of 4-diphosphocytidyl-2-C-methyl-D-erythritol from CTP and 2-C-methyl-D-erythritol 4-phosphate (MEP). The sequence is that of 2-C-methyl-D-erythritol 4-phosphate cytidylyltransferase from Gloeobacter violaceus (strain ATCC 29082 / PCC 7421).